A 481-amino-acid polypeptide reads, in one-letter code: Protein FAM83E (481 aa).

The segment at 1 to 296 (MAASQLAALE…LYAASRPLSA (296 aa)) is DUF1669. The tract at residues 351-481 (KQETPTTTGP…ASGSGSGRRR (131 aa)) is disordered. The segment covering 371–385 (RTRTTSGPPTRPSRS) has biased composition (low complexity). Polar residues-rich tracts occupy residues 391 to 400 (RLSQLSGSSD) and 465 to 474 (NATTSDWASG).

Belongs to the FAM83 family. As to quaternary structure, directly interacts (via DUF1669) with CSNK1A1, CSNK1A1L, CSNK1D and CSNK1E. May interact with RAF1.

The protein localises to the cytoplasm. It localises to the perinuclear region. In terms of biological role, may play a role in MAPK signaling. The protein is Protein FAM83E of Mus musculus (Mouse).